The chain runs to 193 residues: Large ribosomal subunit protein uL18 (193 aa).

The protein belongs to the universal ribosomal protein uL18 family. As to quaternary structure, part of the 50S ribosomal subunit. Contacts the 5S and 23S rRNAs.

Its function is as follows. This is one of the proteins that bind and probably mediate the attachment of the 5S RNA into the large ribosomal subunit, where it forms part of the central protuberance. The chain is Large ribosomal subunit protein uL18 from Methanobrevibacter smithii (strain ATCC 35061 / DSM 861 / OCM 144 / PS).